A 483-amino-acid chain; its full sequence is Glutamyl-tRNA(Gln) amidotransferase subunit A (483 aa).

Active-site charge relay system residues include Lys76 and Ser151. Catalysis depends on Ser175, which acts as the Acyl-ester intermediate.

It belongs to the amidase family. GatA subfamily. In terms of assembly, heterotrimer of A, B and C subunits.

It carries out the reaction L-glutamyl-tRNA(Gln) + L-glutamine + ATP + H2O = L-glutaminyl-tRNA(Gln) + L-glutamate + ADP + phosphate + H(+). Functionally, allows the formation of correctly charged Gln-tRNA(Gln) through the transamidation of misacylated Glu-tRNA(Gln) in organisms which lack glutaminyl-tRNA synthetase. The reaction takes place in the presence of glutamine and ATP through an activated gamma-phospho-Glu-tRNA(Gln). In Pseudomonas putida (strain ATCC 700007 / DSM 6899 / JCM 31910 / BCRC 17059 / LMG 24140 / F1), this protein is Glutamyl-tRNA(Gln) amidotransferase subunit A.